Reading from the N-terminus, the 184-residue chain is Shikimate kinase (184 aa).

Position 20–25 (20–25) interacts with ATP; sequence GVGKSR. Ser-24 provides a ligand contact to Mg(2+). The substrate site is built by Asp-42, Arg-66, and Gly-88. Arg-127 serves as a coordination point for ATP. Arg-146 serves as a coordination point for substrate. Arg-162 contributes to the ATP binding site.

It belongs to the shikimate kinase family. In terms of assembly, monomer. Requires Mg(2+) as cofactor.

It is found in the cytoplasm. It carries out the reaction shikimate + ATP = 3-phosphoshikimate + ADP + H(+). Its pathway is metabolic intermediate biosynthesis; chorismate biosynthesis; chorismate from D-erythrose 4-phosphate and phosphoenolpyruvate: step 5/7. Catalyzes the specific phosphorylation of the 3-hydroxyl group of shikimic acid using ATP as a cosubstrate. In Thermus thermophilus (strain ATCC BAA-163 / DSM 7039 / HB27), this protein is Shikimate kinase.